An 891-amino-acid polypeptide reads, in one-letter code: Alanine--tRNA ligase (891 aa).

Zn(2+) contacts are provided by histidine 574, histidine 578, cysteine 676, and histidine 680.

The protein belongs to the class-II aminoacyl-tRNA synthetase family. It depends on Zn(2+) as a cofactor.

The protein localises to the cytoplasm. The catalysed reaction is tRNA(Ala) + L-alanine + ATP = L-alanyl-tRNA(Ala) + AMP + diphosphate. Its function is as follows. Catalyzes the attachment of alanine to tRNA(Ala) in a two-step reaction: alanine is first activated by ATP to form Ala-AMP and then transferred to the acceptor end of tRNA(Ala). Also edits incorrectly charged Ser-tRNA(Ala) and Gly-tRNA(Ala) via its editing domain. In Synechococcus sp. (strain WH7803), this protein is Alanine--tRNA ligase.